The sequence spans 200 residues: High mobility group protein B3 (200 aa).

Lys3 is subject to N6-acetyllysine. 2 consecutive DNA-binding regions (HMG box) follow at residues 9 to 79 (PKGK…KDYG) and 93 to 161 (PKRP…ADYK). Cysteine sulfonic acid (-SO3H); alternate is present on Cys23. Cys23 and Cys45 are oxidised to a cystine. An N6-acetyllysine mark is found at Lys30 and Lys43. A Cysteine sulfonic acid (-SO3H); alternate modification is found at Cys45. The disordered stretch occupies residues 71–97 (YDREMKDYGPAKGGKKKKDPNAPKRPP). Position 98 is a phosphoserine (Ser98). The residue at position 104 (Cys104) is a Cysteine sulfonic acid (-SO3H). N6-acetyllysine occurs at positions 112 and 139. Positions 161–200 (KSKGKFDGAKGPAKVARKKVEEEEEEEEEEEEEEEEEEDE) are disordered. Residues 182 to 200 (EEEEEEEEEEEEEEEEEDE) show a composition bias toward acidic residues.

Belongs to the HMGB family. In terms of processing, reduction/oxidation of cysteine residues Cys-23, Cys-45 and Cys-104 and a possible intramolecular disulfide bond involving Cys-23 and Cys-45 give rise to different redox forms with specific functional activities in various cellular compartments: 1- fully reduced HMGB3 (HMGB3C23hC45hC104h), 2- disulfide HMGB3 (HMGB3C23-C45C104h) and 3- sulfonyl HMGB3 (HMGB3C23soC45soC104so). As to expression, expressed in bone marrow cells, specifically in primitive Lin-, c-kit+, Sca-1+, IL-7Ralpha- cells, and Ter119+ erythroid cells.

The protein localises to the nucleus. The protein resides in the chromosome. It localises to the cytoplasm. Its function is as follows. Multifunctional protein with various roles in different cellular compartments. May act in a redox sensitive manner. Associates with chromatin and binds DNA with a preference for non-canonical DNA structures such as single-stranded DNA. Can bend DNA and enhance DNA flexibility by looping thus providing a mechanism to promote activities on various gene promoters. Proposed to be involved in the innate immune response to nucleic acids by acting as a cytoplasmic promiscuous immunogenic DNA/RNA sensor. Negatively regulates B-cell and myeloid cell differentiation. In hematopoietic stem cells may regulate the balance between self-renewal and differentiation. Involved in negative regulation of canonical Wnt signaling. The sequence is that of High mobility group protein B3 (Hmgb3) from Mus musculus (Mouse).